A 339-amino-acid chain; its full sequence is DNA-directed RNA polymerase subunit alpha (339 aa).

The segment at 1–233 (MVREEIAVAT…DLFIPFLHAE (233 aa)) is alpha N-terminal domain (alpha-NTD). Residues 267-339 (KKMALKSIFI…FGFDLPKNGK (73 aa)) are alpha C-terminal domain (alpha-CTD).

The protein belongs to the RNA polymerase alpha chain family. In plastids the minimal PEP RNA polymerase catalytic core is composed of four subunits: alpha, beta, beta', and beta''. When a (nuclear-encoded) sigma factor is associated with the core the holoenzyme is formed, which can initiate transcription.

It localises to the plastid. It is found in the chloroplast. It catalyses the reaction RNA(n) + a ribonucleoside 5'-triphosphate = RNA(n+1) + diphosphate. DNA-dependent RNA polymerase catalyzes the transcription of DNA into RNA using the four ribonucleoside triphosphates as substrates. The sequence is that of DNA-directed RNA polymerase subunit alpha from Piper cenocladum (Ant piper).